Here is an 880-residue protein sequence, read N- to C-terminus: Alanine--tRNA ligase (880 aa).

4 residues coordinate Zn(2+): histidine 566, histidine 570, cysteine 668, and histidine 672.

It belongs to the class-II aminoacyl-tRNA synthetase family. Zn(2+) is required as a cofactor.

It is found in the cytoplasm. The enzyme catalyses tRNA(Ala) + L-alanine + ATP = L-alanyl-tRNA(Ala) + AMP + diphosphate. Catalyzes the attachment of alanine to tRNA(Ala) in a two-step reaction: alanine is first activated by ATP to form Ala-AMP and then transferred to the acceptor end of tRNA(Ala). Also edits incorrectly charged Ser-tRNA(Ala) and Gly-tRNA(Ala) via its editing domain. In Nostoc sp. (strain PCC 7120 / SAG 25.82 / UTEX 2576), this protein is Alanine--tRNA ligase.